A 1259-amino-acid chain; its full sequence is Protein retinal degeneration B (1259 aa).

The tract at residues 268 to 378 (GGGEECSDDS…SKGALHSPVG (111 aa)) is disordered. A phosphoserine mark is found at S274 and S277. The segment covering 284–293 (STAATAASTT) has biased composition (low complexity). Residues 318-335 (SSDEEGEEEEDDDEDEND) show a composition bias toward acidic residues. Positions 347-363 (QGGSAQRSRSQSIQMAQ) are enriched in low complexity. A phosphoserine mark is found at S401, S403, and S434. Disordered stretches follow at residues 427–454 (LLGE…GNSR), 472–500 (RGNK…STPS), and 660–692 (SQPG…NSRL). Residues 663–678 (GTASGASNSGGDAATN) are compositionally biased toward low complexity. A compositionally biased stretch (polar residues) spans 679 to 689 (INTHNPLSPRN). Residues 730-913 (LDFEVCDFFM…IAFILRQIGK (184 aa)) form the DDHD domain.

Belongs to the PtdIns transfer protein family. PI transfer class IIA subfamily. Expressed in adult heads, not detected in bodies.

The enzyme catalyses a 1,2-diacyl-sn-glycero-3-phospho-(1D-myo-inositol)(in) = a 1,2-diacyl-sn-glycero-3-phospho-(1D-myo-inositol)(out). It catalyses the reaction a 1,2-diacyl-sn-glycero-3-phosphate(in) = a 1,2-diacyl-sn-glycero-3-phosphate(out). Functionally, catalyzes the transfer of phosphatidylinositol (PI) and phosphatidic acid (PA) between membranes. May control phosphatidylinositol concentration in transport vesicles from the subrhabdomeric cisternae (SRC) to the rhabdomere. May function as a calcium transporter. This chain is Protein retinal degeneration B (rdgB), found in Drosophila melanogaster (Fruit fly).